Here is a 145-residue protein sequence, read N- to C-terminus: Lysozyme-like protein 4 (145 aa).

The N-terminal stretch at 1–19 is a signal peptide; it reads MQLYLVLLLISYLLTPIGA. The region spanning 20 to 145 is the C-type lysozyme domain; it reads SILGRCTVAK…LDRWLDGCDL (126 aa). Cystine bridges form between cysteine 25/cysteine 143, cysteine 49/cysteine 130, cysteine 84/cysteine 95, and cysteine 91/cysteine 109. Glutamate 54 is a catalytic residue.

It belongs to the glycosyl hydrolase 22 family. Monomer. Expressed strongly in testis and in epididymis, and weakly in brain and lung. Detected in sperm (at protein level).

The protein resides in the secreted. It is found in the cytoplasmic vesicle. It localises to the secretory vesicle. The protein localises to the acrosome. Its subcellular location is the cell projection. The protein resides in the cilium. It is found in the flagellum. Functionally, may be involved in fertilization. Has no detectable bacteriolytic in vitro. Has no lysozyme activity in vitro. This chain is Lysozyme-like protein 4 (Lyzl4), found in Mus musculus (Mouse).